A 204-amino-acid chain; its full sequence is Cobalt-containing nitrile hydratase subunit alpha (204 aa).

4 residues coordinate Co(2+): cysteine 108, cysteine 111, serine 112, and cysteine 113. Cysteine 111 bears the Cysteine sulfinic acid (-SO2H) mark. The residue at position 113 (cysteine 113) is a Cysteine sulfenic acid (-SOH).

This sequence belongs to the nitrile hydratase subunit alpha family. Heterotetramer of two alpha and two beta chains. Requires Co(2+) as cofactor.

The catalysed reaction is an aliphatic primary amide = an aliphatic nitrile + H2O. NHase catalyzes the hydration of various nitrile compounds to the corresponding amides. This chain is Cobalt-containing nitrile hydratase subunit alpha, found in Pseudonocardia thermophila.